We begin with the raw amino-acid sequence, 209 residues long: C-type lectin domain family 6 member A (209 aa).

The Cytoplasmic portion of the chain corresponds to 1–20 (MMQEQQPQSTEKRGWLSLRL). The chain crosses the membrane as a helical; Signal-anchor for type II membrane protein span at residues 21–41 (WSVAGISIALLSACFIVSCVV). Residues 42–209 (TYHFTYGETG…SICEMNKIYL (168 aa)) are Extracellular-facing. 4 disulfide bridges follow: cysteine 66/cysteine 78, cysteine 79/cysteine 90, cysteine 107/cysteine 202, and cysteine 176/cysteine 194. Residues 86–203 (FGSSCYFISS…CETRRNSICE (118 aa)) enclose the C-type lectin domain. 3 residues coordinate Ca(2+): valine 116, asparagine 118, and glutamate 122. The N-linked (GlcNAc...) asparagine glycan is linked to asparagine 131. Residues glutamate 168, asparagine 170, and glutamate 174 each coordinate Ca(2+). Alpha-D-mannopyranose contacts are provided by residues 168–170 (EPN), glutamate 174, tryptophan 182, 190–191 (ND), and arginine 198. Asparagine 170 carries N-linked (GlcNAc...) asparagine glycosylation. Ca(2+)-binding residues include asparagine 190 and aspartate 191. A Ca(2+)-binding site is contributed by glutamate 203.

As to quaternary structure, associated with FCER1G. Heterodimer with CLEC4D; this heterodimer forms a pattern recognition receptor (PRR) against fungal infection. Expressed in lung, spleen, lymph node, leukocytes, bone marrow, tonsils and dendritic cells. Strongly expressed in purified monocytes and weakly in B-cells. In peripheral blood cells, preferentially expressed in plasmacytoids rather than myeloids.

It localises to the cell membrane. Its function is as follows. Calcium-dependent lectin that acts as a pattern recognition receptor (PRR) of the innate immune system: specifically recognizes and binds alpha-mannans on C.albicans hypheas. Binding of C.albicans alpha-mannans to this receptor complex leads to phosphorylation of the immunoreceptor tyrosine-based activation motif (ITAM) of FCER1G, triggering activation of SYK, CARD9 and NF-kappa-B, consequently driving maturation of antigen-presenting cells and shaping antigen-specific priming of T-cells toward effector T-helper 1 and T-helper 17 cell subtypes. Recognizes also, in a mannose-dependent manner, allergens from house dust mite and fungi, by promoting cysteinyl leukotriene production. Recognizes soluble elements from the eggs of Shistosoma mansoni altering adaptive immune responses. This Homo sapiens (Human) protein is C-type lectin domain family 6 member A.